Consider the following 400-residue polypeptide: Peroxisome biogenesis factor 16 (400 aa).

The segment at 176-226 is disordered; the sequence is QKQFQNKRPAVTMSINNNNNINNNDNNNINNNNNTNDDNFNNNNNNNNNRR. The span at 190 to 224 shows a compositional bias: low complexity; sequence INNNNNINNNDNNNINNNNNTNDDNFNNNNNNNNN.

It belongs to the peroxin-16 family.

The protein localises to the cytoplasm. Its function is as follows. Required for peroxisome membrane biogenesis. The protein is Peroxisome biogenesis factor 16 (pex16) of Dictyostelium discoideum (Social amoeba).